Consider the following 243-residue polypeptide: 2-C-methyl-D-erythritol 4-phosphate cytidylyltransferase (243 aa).

Belongs to the IspD/TarI cytidylyltransferase family. IspD subfamily.

It carries out the reaction 2-C-methyl-D-erythritol 4-phosphate + CTP + H(+) = 4-CDP-2-C-methyl-D-erythritol + diphosphate. Its pathway is isoprenoid biosynthesis; isopentenyl diphosphate biosynthesis via DXP pathway; isopentenyl diphosphate from 1-deoxy-D-xylulose 5-phosphate: step 2/6. Functionally, catalyzes the formation of 4-diphosphocytidyl-2-C-methyl-D-erythritol from CTP and 2-C-methyl-D-erythritol 4-phosphate (MEP). The chain is 2-C-methyl-D-erythritol 4-phosphate cytidylyltransferase from Colwellia psychrerythraea (strain 34H / ATCC BAA-681) (Vibrio psychroerythus).